We begin with the raw amino-acid sequence, 436 residues long: 2-aminohexano-6-lactam racemase (436 aa).

Pyridoxal 5'-phosphate contacts are provided by residues 110–111 (GS), Tyr137, and 238–241 (DEVK). Residue Tyr137 is part of the active site. Lys267 is subject to N6-(pyridoxal phosphate)lysine. Thr295 is a binding site for pyridoxal 5'-phosphate.

This sequence belongs to the class-III pyridoxal-phosphate-dependent aminotransferase family. In terms of assembly, monomer. Pyridoxal 5'-phosphate is required as a cofactor.

The enzyme catalyses L-2-aminohexano-6-lactam = D-2-aminohexano-6-lactam. In terms of biological role, catalyzes the interconversion of L-alpha-amino-epsilon-caprolactam and D-alpha-amino-epsilon-caprolactam. In Achromobacter obae, this protein is 2-aminohexano-6-lactam racemase.